A 202-amino-acid polypeptide reads, in one-letter code: Ribonuclease HII (202 aa).

The 190-residue stretch at 12 to 201 (LLIAGVDEAG…VRQLKLFIPE (190 aa)) folds into the RNase H type-2 domain. A divalent metal cation contacts are provided by Asp18, Glu19, and Asp110.

This sequence belongs to the RNase HII family. Mn(2+) is required as a cofactor. Mg(2+) serves as cofactor.

The protein resides in the cytoplasm. The catalysed reaction is Endonucleolytic cleavage to 5'-phosphomonoester.. Its function is as follows. Endonuclease that specifically degrades the RNA of RNA-DNA hybrids. In Coxiella burnetii (strain CbuK_Q154) (Coxiella burnetii (strain Q154)), this protein is Ribonuclease HII.